Reading from the N-terminus, the 499-residue chain is Type-1 glutamine synthetase 1 (499 aa).

The 97-residue stretch at P50 to N146 folds into the GS beta-grasp domain. The region spanning P158–F499 is the GS catalytic domain.

The protein belongs to the glutamine synthetase family.

It catalyses the reaction L-glutamate + NH4(+) + ATP = L-glutamine + ADP + phosphate + H(+). This Dictyostelium discoideum (Social amoeba) protein is Type-1 glutamine synthetase 1 (glnA1).